Reading from the N-terminus, the 421-residue chain is Serine hydroxymethyltransferase (421 aa).

Residues Leu-121 and 125–127 contribute to the (6S)-5,6,7,8-tetrahydrofolate site; that span reads GHL. Lys-229 is modified (N6-(pyridoxal phosphate)lysine).

It belongs to the SHMT family. In terms of assembly, homodimer. Requires pyridoxal 5'-phosphate as cofactor.

The protein localises to the cytoplasm. It catalyses the reaction (6R)-5,10-methylene-5,6,7,8-tetrahydrofolate + glycine + H2O = (6S)-5,6,7,8-tetrahydrofolate + L-serine. Its pathway is one-carbon metabolism; tetrahydrofolate interconversion. It participates in amino-acid biosynthesis; glycine biosynthesis; glycine from L-serine: step 1/1. Its function is as follows. Catalyzes the reversible interconversion of serine and glycine with tetrahydrofolate (THF) serving as the one-carbon carrier. This reaction serves as the major source of one-carbon groups required for the biosynthesis of purines, thymidylate, methionine, and other important biomolecules. Also exhibits THF-independent aldolase activity toward beta-hydroxyamino acids, producing glycine and aldehydes, via a retro-aldol mechanism. The sequence is that of Serine hydroxymethyltransferase from Haemophilus influenzae (strain 86-028NP).